A 436-amino-acid polypeptide reads, in one-letter code: Trigger factor (436 aa).

The PPIase FKBP-type domain occupies threonine 163 to proline 248.

The protein belongs to the FKBP-type PPIase family. Tig subfamily.

The protein localises to the cytoplasm. It carries out the reaction [protein]-peptidylproline (omega=180) = [protein]-peptidylproline (omega=0). Involved in protein export. Acts as a chaperone by maintaining the newly synthesized protein in an open conformation. Functions as a peptidyl-prolyl cis-trans isomerase. The sequence is that of Trigger factor from Laribacter hongkongensis (strain HLHK9).